A 448-amino-acid polypeptide reads, in one-letter code: Tryptamine benzoyltransferase 2 (448 aa).

The tract at residues 1–20 is disordered; that stretch reads MEITSSAMLKPAPTPTPHPL. Residues His-155 and Asp-386 each act as proton acceptor in the active site.

It belongs to the plant acyltransferase family.

Its function is as follows. Hydroxycinnamoyl transferase that catalyzes the transfer of an acyl from benzoyl-CoA to tryptamine, to produce benzoyl tryptamine. Serotonin and tyramine serve as acyl acceptors in vitro. Specific for benzoyl-CoA as acyl donor. Has no activity with p-coumaroyl-CoA, caffeoyl-CoA, or feruloyl-CoA as acyl donors. The chain is Tryptamine benzoyltransferase 2 from Oryza sativa subsp. japonica (Rice).